The following is a 539-amino-acid chain: CTP synthase (539 aa).

Residues 1-268 (MSFKSIFLTG…SDFLLNKLGF (268 aa)) form an amidoligase domain region. Residue S14 participates in CTP binding. Residue S14 participates in UTP binding. 15–20 (SLGKGL) contributes to the ATP binding site. L-glutamine is bound at residue Y55. D72 lines the ATP pocket. Positions 72 and 142 each coordinate Mg(2+). Residues 149–151 (DIE), 188–193 (KTKPTQ), and K224 contribute to the CTP site. UTP contacts are provided by residues 188 to 193 (KTKPTQ) and K224. The Glutamine amidotransferase type-1 domain occupies 294–532 (RIGLVGKYLE…IRAAKAYSLE (239 aa)). G353 is a binding site for L-glutamine. C380 (nucleophile; for glutamine hydrolysis) is an active-site residue. Residues 381–384 (LGMQ), E404, and R460 each bind L-glutamine. Residues H505 and E507 contribute to the active site.

This sequence belongs to the CTP synthase family. As to quaternary structure, homotetramer.

The catalysed reaction is UTP + L-glutamine + ATP + H2O = CTP + L-glutamate + ADP + phosphate + 2 H(+). It catalyses the reaction L-glutamine + H2O = L-glutamate + NH4(+). The enzyme catalyses UTP + NH4(+) + ATP = CTP + ADP + phosphate + 2 H(+). Its pathway is pyrimidine metabolism; CTP biosynthesis via de novo pathway; CTP from UDP: step 2/2. Its activity is regulated as follows. Allosterically activated by GTP, when glutamine is the substrate; GTP has no effect on the reaction when ammonia is the substrate. The allosteric effector GTP functions by stabilizing the protein conformation that binds the tetrahedral intermediate(s) formed during glutamine hydrolysis. Inhibited by the product CTP, via allosteric rather than competitive inhibition. Its function is as follows. Catalyzes the ATP-dependent amination of UTP to CTP with either L-glutamine or ammonia as the source of nitrogen. Regulates intracellular CTP levels through interactions with the four ribonucleotide triphosphates. In Chlamydia trachomatis serovar L2 (strain ATCC VR-902B / DSM 19102 / 434/Bu), this protein is CTP synthase.